The following is a 102-amino-acid chain: MICOS complex subunit MIC12 (102 aa).

The chain crosses the membrane as a helical span at residues 4–26 (VLKLTSVTLAASSLAAAGYFYAF).

It belongs to the MICOS complex subunit Mic12 family. As to quaternary structure, component of the mitochondrial contact site and cristae organizing system (MICOS) complex.

The protein localises to the mitochondrion inner membrane. Component of the MICOS complex, a large protein complex of the mitochondrial inner membrane that plays crucial roles in the maintenance of crista junctions, inner membrane architecture, and formation of contact sites to the outer membrane. This chain is MICOS complex subunit MIC12 (AIM5), found in Lachancea thermotolerans (strain ATCC 56472 / CBS 6340 / NRRL Y-8284) (Yeast).